The sequence spans 592 residues: Coronatine-insensitive protein 1 (592 aa).

The region spanning 16–57 (TVDDVIEQVMTYITDPKDRDSASLVCRRWFKIDSETREHVTM) is the F-box domain. LRR repeat units lie at residues 58–82 (ALCY…KLKG), 83–102 (KPRA…YVTP), 103–120 (WVTE…VHFR), 121–154 (RMIV…FTTD), 155–182 (GLLS…KDGK), 183–210 (WLHE…ISPK), 211–236 (DLET…LELV), 237–264 (GFFK…EKYM), 265–283 (NLVF…MGPN), 284–308 (EMPI…LETE), 309–332 (DHCT…IGDR), 333–368 (GLEV…VSQR), 369–393 (GLIA…ITNE), 394–426 (SLES…PLDN), 427–456 (GVRS…LGLS), 457–478 (YIGQ…ESDE), 479–500 (GLME…GCCF), and 501–524 (SERA…QGYR). A jasmonate-binding site is contributed by Arg85. Jasmonate-binding residues include Arg348, Tyr386, and Arg409. Arg496 contributes to the jasmonate binding site.

Component of SCF(COI1) E3 ubiquitin ligase complexes at least composed of ASK1 or ASK2, CUL1, RBX1A or RBX1B and COI1. Interacts with ASK1 and ASK2, but separately. Also binds to ASK11 and ASK12. Interacts with RBCS-1B and HDA6. SCF complexes interact with the COP9 signalosome (CSN). Interacts with TIFY10A.

It participates in protein modification; protein ubiquitination. Functionally, required for jasmonate-regulated plant fertility and defense processes, and for coronatine and/or other elicitors perceptions/responses. Seems to not be required for meiosis. Required for the regulation of some genes induced by wounding, but not for all. Component of SCF(COI1) E3 ubiquitin ligase complexes, which may mediate the ubiquitination and subsequent proteasomal degradation of target proteins (probably including the ribulose bisphosphate carboxylase small chain 1B RBCS-1B and the histone deacetylase HDA6). These SCF complexes play crucial roles in regulating response to jasmonate, and their interactions with the COP9 signalosome (CSN) appear to be important for their activity. Interacts with TIFY10A and inositol pentakisphosphate to form a high-affinity jasmonates coreceptor. Involved in the regulation of plant gene expression during plant-pathogen interactions with Pseudomonas syringae and Alternaria brassicicola. The chain is Coronatine-insensitive protein 1 (COI1) from Arabidopsis thaliana (Mouse-ear cress).